The primary structure comprises 572 residues: Nucleolin 1 (572 aa).

Disordered stretches follow at residues 1-312 (MGKA…ESAT) and 488-572 (DEAK…FGDE). A compositionally biased stretch (low complexity) spans 7–21 (KSVAVAVAPAAVPAK). Residues 27–38 (KREAEDEIEKAV) are compositionally biased toward basic and acidic residues. Composition is skewed to low complexity over residues 45 to 58 (AAAA…PAPK) and 72 to 81 (KAASSSSGSS). 7 stretches are compositionally biased toward acidic residues: residues 82–91 (SEEDSSESEE), 109–122 (SSDE…DDED), 144–156 (SESD…DEDE), 177–191 (DSSE…SDED), 208–222 (STDG…EDED), 235–247 (SDEE…ESSD), and 261–276 (ESSE…EEDE). Positions 300–311 (PASNQSQGTESA) are enriched in polar residues. 2 consecutive RRM domains span residues 311-387 (ATLF…LAHE) and 411-492 (QSIF…EAKP). Basic and acidic residues-rich tracts occupy residues 488-520 (DEAK…DRFG) and 528-545 (GGRD…DGGR). The segment covering 553 to 566 (QSRQSAGTASTGKK) has biased composition (polar residues).

The protein resides in the nucleus. Its subcellular location is the nucleolus. Involved in pre-rRNA processing and ribosome assembly. The sequence is that of Nucleolin 1 from Oryza sativa subsp. japonica (Rice).